The sequence spans 354 residues: MRVTDFSFELPESLIAHYPQPERSRCRLLSLEGPTGALTHGTFTDLLDKLNPGDLLVFNNTRVIPARLFGRKASGGKIEVLVERMLDDKRILAHIRASKAPKPGTELLLGDDESIHATMTARHGALFEVEFNDPRPVLDILNAIGHMPLPPYIDRPDEDADRELYQTVYSEKPGAVAAPTAGLHFDEPLLAALREKGVEMAFVTLHVGAGTFQPVRVDTIEDHIMHSEYAEVPQEVVDAVLVAKVRGNRVIAVGTTSVRSLESAAQAAKSDLIEPFFGDTQIFIYPGYQYKVIDALITNFHLPESTLIMLVSAFAGYQHTMNAYKTAVEQKYRFFSYGDAMFITYNPQAIFERP.

Belongs to the QueA family. Monomer.

It is found in the cytoplasm. It carries out the reaction 7-aminomethyl-7-carbaguanosine(34) in tRNA + S-adenosyl-L-methionine = epoxyqueuosine(34) in tRNA + adenine + L-methionine + 2 H(+). Its pathway is tRNA modification; tRNA-queuosine biosynthesis. In terms of biological role, transfers and isomerizes the ribose moiety from AdoMet to the 7-aminomethyl group of 7-deazaguanine (preQ1-tRNA) to give epoxyqueuosine (oQ-tRNA). In Salmonella newport (strain SL254), this protein is S-adenosylmethionine:tRNA ribosyltransferase-isomerase.